The primary structure comprises 241 residues: 2-C-methyl-D-erythritol 4-phosphate cytidylyltransferase (241 aa).

Belongs to the IspD/TarI cytidylyltransferase family. IspD subfamily.

It catalyses the reaction 2-C-methyl-D-erythritol 4-phosphate + CTP + H(+) = 4-CDP-2-C-methyl-D-erythritol + diphosphate. The protein operates within isoprenoid biosynthesis; isopentenyl diphosphate biosynthesis via DXP pathway; isopentenyl diphosphate from 1-deoxy-D-xylulose 5-phosphate: step 2/6. Its function is as follows. Catalyzes the formation of 4-diphosphocytidyl-2-C-methyl-D-erythritol from CTP and 2-C-methyl-D-erythritol 4-phosphate (MEP). The sequence is that of 2-C-methyl-D-erythritol 4-phosphate cytidylyltransferase from Pseudoalteromonas translucida (strain TAC 125).